Consider the following 99-residue polypeptide: CLAVATA3/ESR (CLE)-related protein 17 (99 aa).

An N-terminal signal peptide occupies residues 1–21 (MTHVLVRRQGQGKKRRWDVNM). Over residues 77-89 (LSRDDIYGDDKRV) the composition is skewed to basic and acidic residues. The interval 77–99 (LSRDDIYGDDKRVVHTGPNPLHN) is disordered. At Pro-94 the chain carries Hydroxyproline. The O-linked (Ara...) hydroxyproline glycan is linked to Pro-94.

The protein belongs to the CLV3/ESR signal peptide family. Post-translationally, the O-glycosylation (arabinosylation) of the hydroxyproline Pro-94 enhances binding affinity of the CLE17p peptide for its receptor. Mostly expressed in seedlings, roots, flowers, stems and apex, and, to a lower extent, in leaves and siliques.

It is found in the secreted. It localises to the extracellular space. Extracellular signal peptide that regulates cell fate. Represses root apical meristem maintenance. Regulates the transition of protophloem cells from proliferation to differentiation, thus impinging on postembryonic growth capacity of the root meristem; this signaling pathway requires CRN and CLV2. This is CLAVATA3/ESR (CLE)-related protein 17 from Arabidopsis thaliana (Mouse-ear cress).